The following is a 280-amino-acid chain: DNA repair protein RecO (280 aa).

The interval 261–280 is disordered; sequence DMAHGNHTGQEDLPATASGA.

This sequence belongs to the RecO family.

Its function is as follows. Involved in DNA repair and RecF pathway recombination. The chain is DNA repair protein RecO from Mycolicibacterium smegmatis (strain ATCC 700084 / mc(2)155) (Mycobacterium smegmatis).